A 620-amino-acid chain; its full sequence is Chaperone protein HtpG (620 aa).

The a; substrate-binding stretch occupies residues 1 to 334; it reads MTTTDTAPQS…SEDLPLNLSR (334 aa). Residues 335 to 548 are b; that stretch reads EMLQNNPQLA…GLGPDRALER (214 aa). The interval 549–620 is c; that stretch reads MLAQQNRGAA…RLNRLVLRAL (72 aa).

The protein belongs to the heat shock protein 90 family. In terms of assembly, homodimer.

The protein resides in the cytoplasm. Molecular chaperone. Has ATPase activity. The sequence is that of Chaperone protein HtpG from Rhodopseudomonas palustris (strain BisB18).